The following is a 237-amino-acid chain: E3 ubiquitin-protein ligase RNF166 (237 aa).

An RING-type zinc finger spans residues 33-73 (CPICLEVYHRPVAIGSCGHTFCGECLQPCLQVPSPLCPLCR). Zn(2+)-binding residues include Cys-98, Cys-101, His-113, and Cys-117. The segment at 98–117 (CRGCNKKVTLAKMRVHISSC) adopts a C2HC RNF-type zinc-finger fold. In terms of domain architecture, UIM spans 221–237 (DEEAAFQAALALSLSEN).

It localises to the cytoplasm. It carries out the reaction S-ubiquitinyl-[E2 ubiquitin-conjugating enzyme]-L-cysteine + [acceptor protein]-L-lysine = [E2 ubiquitin-conjugating enzyme]-L-cysteine + N(6)-ubiquitinyl-[acceptor protein]-L-lysine.. The protein operates within protein modification; protein ubiquitination. Its function is as follows. E3 ubiquitin-protein ligase that promotes the ubiquitination of different substrates. In turn, participates in different biological processes including interferon production or autophagy. Plays a role in the activation of RNA virus-induced interferon-beta production by promoting the ubiquitination of TRAF3 and TRAF6. Also plays a role in the early recruitment of autophagy adapters to bacteria. Mediates 'Lys-29' and 'Lys-33'-linked ubiquitination of SQSTM1 leading to xenophagic targeting of bacteria and inhibition of their replication. This is E3 ubiquitin-protein ligase RNF166 (RNF166) from Homo sapiens (Human).